A 547-amino-acid polypeptide reads, in one-letter code: Mercuric reductase (547 aa).

The HMA domain maps to 5–70 (APTELAITGM…AVVASGYGVH (66 aa)). A metal cation contacts are provided by cysteine 16 and cysteine 19. FAD contacts are provided by alanine 96 and threonine 121. A disulfide bond links cysteine 122 and cysteine 127. The FAD site is built by lysine 131, alanine 197, aspartate 389, and valine 397. 2 residues coordinate Hg(2+): cysteine 544 and cysteine 545.

It belongs to the class-I pyridine nucleotide-disulfide oxidoreductase family. In terms of assembly, homodimer. Requires FAD as cofactor.

The enzyme catalyses Hg + NADP(+) + H(+) = Hg(2+) + NADPH. In terms of biological role, resistance to Hg(2+) in bacteria appears to be governed by a specialized system which includes mercuric reductase. MerA protein is responsible for volatilizing mercury as Hg(0). The sequence is that of Mercuric reductase (merA) from Acidithiobacillus ferrooxidans (Thiobacillus ferrooxidans).